Consider the following 1099-residue polypeptide: MADPSFSYTLHYPPVDGSLLFPEIIAFNAEHNSNVPFFVFPEDGSANGVVSISHLEFYRACHRVAHALRPNRAGPDGEIIAIIAMTDTIQYFALLVGVIIAGYIPFPMSPRNSAAAVSNLLLKTSCHRLITTQHSLQPLLDGIKSELGSFNFSFQDVPCLAHIYPKLGLETIDDPFEPFPARPSRPSASEVMMYLHSSGSTGFPKAIPQTHQTVIHWCAAAPVVDTKLYPADTCLGVMLLPSFHTLGIICSLYLPLITLRSVSVYAPTSYNDPKAIPVIPTSENILEGVQRTNCNALMAVPAFIELWALSPSAIEILKSLRFLASSGGPLSEKVGNALASVGVPLVNVYGGTECGGLNSMFRRKDEVCDWVWINLSPRVMFRWVPQGEGLYECQILQSEMHRVSVENLPDVKGYATSDIFLKHPTKEGLWKLVGRKDDIIVLSSGEKTVPAPMENTIASNPVVGGTVMFGRARNHVGILIEPRQGFDVNIDDPKQVAAFRNRIWPEVEEANKAAAAFSRIFKEMILITRPDKPLPRTGKGTVMRKAAVTIYDKEIDALYDTVEASTTVNKDVELPKDWSEESLVVWLGEHAARVNSDKKVDPEVDVFEQGFDSLTATFLRNRIIGSLSSSTDSNVRTTARQIDQNIVFSNPTIKRLSQALARVVSNPQFTGKEGSLINRKVELENTLAMYSEGLPGTLSPQVEQPNGDGHSCHVVLLTGSTGGLGSYLLASLLENEQVSLVYAFNRSSKDGKSSEERQKAGFEDRGLDIALLSSPKLRYIEGDAAQDKLGLGDATYDKLRTSINVIIHNAWRLDFSLSLSSFGSNIKGTRNLVDLALSSPNAPSLRFLFTSSISSAQGWDKSKGACPEEVLFDANVASGGSGYGASKYVCERILEKSGLQASSFRIGQISGGQPRGAWSVTDWFPMLVKSSLALGALPVAKGVVSWLPPHAVSQAILDVAFAKAKPPPVINLVHPRPVQWAALMQSIGDALVHNNLLTKPLPIVAFEEWFSRLEQKAIGASADDFKEMPALKLLPFMRMIAQSDKSIRKVTSDGEAGGFVVFSTTKAQQLSRTMRELAPITAEDVALWMKYWASKGMFM.

The segment at 29-360 is adenylation (A) domain; it reads AEHNSNVPFF…GTECGGLNSM (332 aa). AMP-binding positions include histidine 244, 347–348, threonine 352, and 432–435; these read NV and LVGR. One can recognise a Carrier domain in the interval 578 to 664; sequence WSEESLVVWL…RLSQALARVV (87 aa). Serine 613 bears the O-(pantetheine 4'-phosphoryl)serine mark. A reductase (R) domain region spans residues 717-952; that stretch reads LTGSTGGLGS…VVSWLPPHAV (236 aa). Residues 721–724, 809–811, tyrosine 883, and lysine 887 each bind NADP(+); these read TGGL and NAW.

The protein belongs to the adenylate-forming reductase family.

In terms of biological role, adenylate-forming reductase, a natural product biosynthesis enzyme that resembles non-ribosomal peptide synthetases, yet serves to modify one substrate, rather than to condense two or more building blocks. The A-domain preferentially accepts benzoic acid as substrate. The natural product of the enzyme is not yet known. The sequence is that of Adenylate-forming reductase Nps11 from Serpula lacrymans var. lacrymans (strain S7.9) (Dry rot fungus).